A 176-amino-acid chain; its full sequence is Adenine phosphoribosyltransferase (176 aa).

Belongs to the purine/pyrimidine phosphoribosyltransferase family. In terms of assembly, homodimer.

The protein localises to the cytoplasm. It catalyses the reaction AMP + diphosphate = 5-phospho-alpha-D-ribose 1-diphosphate + adenine. The protein operates within purine metabolism; AMP biosynthesis via salvage pathway; AMP from adenine: step 1/1. Functionally, catalyzes a salvage reaction resulting in the formation of AMP, that is energically less costly than de novo synthesis. The chain is Adenine phosphoribosyltransferase from Borreliella burgdorferi (strain ZS7) (Borrelia burgdorferi).